Consider the following 505-residue polypeptide: MENKKNKKVILVVIDGLGLRKEKIGNAFELAKTPFFDKMFKEFPWSFIQASGKFVGLPEGQMGNSEVGHLNIGAGQIVYTGLSLINKDLEEKNFINNKAFLEVIEDVKKNNSTLHLMGLVSPGGVHSLEDHLFEIIDVAYQKGLKKVSVHVFGDGRDVAPRSIKSSFEKLEKITNKYNYDIASISGRFYSMDRDKIFERTEKAYEALLGNSNSKFDNWSEFLNKQYSQEISDEFFIPSINASKNVNFVKDGDSIIFFNFRPDRARQLTHLLIGSSLYDFKPKKPVKINKFCSMMKYEGIETLIAFEEMEIKNPIGKVAEKAGLKQLRLAETQKYAHVTYFMDGGVDIEYKNSKRIMVESQKVRSYADHPEMSAKGITDELIKNAKDFDLTILNYANPDMVGHTGVLTSTIKAVEILDYELSRLVDFAQKNNITVFITADHGNAEVTEDDKGNPQTKHTSNPVMLITSDKNLKLKDGKLANISPTILDYLDIEKHEDMNEESLIIK.

Aspartate 15 and serine 65 together coordinate Mn(2+). Residue serine 65 is the Phosphoserine intermediate of the active site. Residues histidine 126, 156 to 157 (RD), arginine 187, arginine 193, 260 to 263 (RPDR), and lysine 333 contribute to the substrate site. Residues aspartate 398, histidine 402, aspartate 439, histidine 440, and histidine 457 each contribute to the Mn(2+) site.

Belongs to the BPG-independent phosphoglycerate mutase family. As to quaternary structure, monomer. Requires Mn(2+) as cofactor.

The enzyme catalyses (2R)-2-phosphoglycerate = (2R)-3-phosphoglycerate. Its pathway is carbohydrate degradation; glycolysis; pyruvate from D-glyceraldehyde 3-phosphate: step 3/5. Catalyzes the interconversion of 2-phosphoglycerate and 3-phosphoglycerate. The polypeptide is 2,3-bisphosphoglycerate-independent phosphoglycerate mutase (Mycoplasmopsis pulmonis (strain UAB CTIP) (Mycoplasma pulmonis)).